The chain runs to 62 residues: Photosystem II reaction center protein Z (62 aa).

Helical transmembrane passes span 8 to 28 (ALLA…VVFA) and 41 to 61 (FSGL…NSFV).

This sequence belongs to the PsbZ family. As to quaternary structure, PSII is composed of 1 copy each of membrane proteins PsbA, PsbB, PsbC, PsbD, PsbE, PsbF, PsbH, PsbI, PsbJ, PsbK, PsbL, PsbM, PsbT, PsbY, PsbZ, Psb30/Ycf12, at least 3 peripheral proteins of the oxygen-evolving complex and a large number of cofactors. It forms dimeric complexes.

Its subcellular location is the plastid. The protein resides in the chloroplast thylakoid membrane. In terms of biological role, controls the interaction of photosystem II (PSII) cores with the light-harvesting antenna, aiding in the dissipation of excitation energy within PSII. PSII is a light-driven water plastoquinone oxidoreductase, using light energy to abstract electrons from H(2)O, generating a proton gradient subsequently used for ATP formation. This is Photosystem II reaction center protein Z from Chlamydomonas reinhardtii (Chlamydomonas smithii).